Consider the following 199-residue polypeptide: Peptidyl-tRNA hydrolase (199 aa).

Tyr-15 lines the tRNA pocket. His-20 serves as the catalytic Proton acceptor. Residues Phe-66, Asn-68, and Asn-114 each coordinate tRNA.

Belongs to the PTH family. In terms of assembly, monomer.

It localises to the cytoplasm. The catalysed reaction is an N-acyl-L-alpha-aminoacyl-tRNA + H2O = an N-acyl-L-amino acid + a tRNA + H(+). Hydrolyzes ribosome-free peptidyl-tRNAs (with 1 or more amino acids incorporated), which drop off the ribosome during protein synthesis, or as a result of ribosome stalling. Its function is as follows. Catalyzes the release of premature peptidyl moieties from peptidyl-tRNA molecules trapped in stalled 50S ribosomal subunits, and thus maintains levels of free tRNAs and 50S ribosomes. In Cupriavidus pinatubonensis (strain JMP 134 / LMG 1197) (Cupriavidus necator (strain JMP 134)), this protein is Peptidyl-tRNA hydrolase.